We begin with the raw amino-acid sequence, 240 residues long: Ribonuclease T2 (240 aa).

The signal sequence occupies residues 1–19 (MRFIAFAVIFSAVYLCSSA). Residues cysteine 41 and cysteine 46 are joined by a disulfide bond. The active site involves histidine 56. Cystine bridges form between cysteine 66–cysteine 110, cysteine 173–cysteine 227, and cysteine 191–cysteine 201. 2 N-linked (GlcNAc...) asparagine glycosylation sites follow: asparagine 67 and asparagine 73. Active-site residues include glutamate 103 and histidine 107.

The protein belongs to the RNase T2 family. Ubiquitous.

The protein localises to the lysosome lumen. It localises to the endoplasmic reticulum lumen. Its subcellular location is the secreted. The catalysed reaction is a ribonucleotidyl-ribonucleotide-RNA + H2O = a 3'-end 3'-phospho-ribonucleotide-RNA + a 5'-end dephospho-ribonucleoside-RNA + H(+). Its function is as follows. Has ribonuclease activity, with higher activity at acidic pH. Probably is involved in lysosomal degradation of ribosomal RNA. The polypeptide is Ribonuclease T2 (rnaset2) (Danio rerio (Zebrafish)).